The chain runs to 570 residues: MSMFCYQCQEAAGGRGCTVKGVCGKTEDIAKTQDLIIYVVKGIAIYSSQAREMGLNTSEADKFIVESLFSTITNANFDAKALNSRVQKGLKIRQSLKDDIIKAGGSYNSKENKSWTSKFLSVLGIKNDKDEKEIHDAAIWAANNPEDFKKKAETVGVLATENEDIRSLRELLTYGLKGMAAYLEHANNLGYAEDSIHAFMEKALVATLDDTLSADELTALVLECGKYGVDVMALLDKANTSTYGNPEITKVNIGVRNNPGILISGHDLKDMEELLKQTEGTGVDVYTHSEMLPANYYPAFKKYKHFVGNYGNAWWKQNEEFEAFNGPILMTTNCIVTPKASYKDRMYTTGVTGFEGVKHINPSKDGKKDFSEIIEHAKRCASPKEIEKGEIIGGFAHNQVLALAPQVVDAVKTGAIKRFFVMAGCDGRMKSRNYYTDFAKALPKDTVILTAGCAKYKYNKLDLGDINGIPRVLDAGQCNDSYSLAVIALKLKEVFELEDINELPISYNIAWYEQKAVIVLLALLHLGVKNIHLGPTLPAFLSPNVAKILVENFGIGTISSVDEDIKMFMN.

Residues Cys5, Cys8, Cys17, and Cys23 each contribute to the [4Fe-4S] cluster site. His266, Glu290, Cys334, Cys425, Cys453, Cys478, Glu513, and Lys515 together coordinate hybrid [4Fe-2O-2S] cluster. Cys425 carries the cysteine persulfide modification.

It belongs to the HCP family. The cofactor is [4Fe-4S] cluster. Hybrid [4Fe-2O-2S] cluster serves as cofactor.

The protein resides in the cytoplasm. It carries out the reaction A + NH4(+) + H2O = hydroxylamine + AH2 + H(+). Catalyzes the reduction of hydroxylamine to form NH(3) and H(2)O. The protein is Hydroxylamine reductase of Clostridium botulinum (strain 657 / Type Ba4).